An 89-amino-acid polypeptide reads, in one-letter code: Small ribosomal subunit protein uS15 (89 aa).

Over residues 1 to 18 the composition is skewed to basic and acidic residues; sequence MALSAQEKDAIVKEHQTS. The segment at 1 to 25 is disordered; that stretch reads MALSAQEKDAIVKEHQTSETDTGSP.

It belongs to the universal ribosomal protein uS15 family. As to quaternary structure, part of the 30S ribosomal subunit. Forms a bridge to the 50S subunit in the 70S ribosome, contacting the 23S rRNA.

Its function is as follows. One of the primary rRNA binding proteins, it binds directly to 16S rRNA where it helps nucleate assembly of the platform of the 30S subunit by binding and bridging several RNA helices of the 16S rRNA. Functionally, forms an intersubunit bridge (bridge B4) with the 23S rRNA of the 50S subunit in the ribosome. This chain is Small ribosomal subunit protein uS15, found in Teredinibacter turnerae (strain ATCC 39867 / T7901).